Here is a 404-residue protein sequence, read N- to C-terminus: uncharacterized protein (404 aa).

The next 12 membrane-spanning stretches (helical) occupy residues 3–23 (IIAK…PITE), 43–63 (TTQI…LTLG), 73–93 (PVVL…IFAP), 95–115 (IETL…GSVI), 135–155 (SLSP…GYII), 162–182 (YTFV…CKIL), 216–236 (IIGA…FIFI), 248–268 (KLAF…GYLI), 280–300 (ILGL…ALIL), 309–329 (IAVI…NLLI), 346–366 (TAGS…TFLV), and 377–397 (FALL…YILI).

It belongs to the major facilitator superfamily. Bcr/CmlA family.

The protein resides in the cell inner membrane. This is an uncharacterized protein from Rickettsia bellii (strain RML369-C).